Reading from the N-terminus, the 335-residue chain is 3-ketodihydrosphingosine reductase TSC10 (335 aa).

NADPH is bound by residues glycine 42, serine 44, serine 45, glycine 46, arginine 67, aspartate 68, lysine 71, aspartate 95, and leucine 96. Positions 42–46 (GGSSG) match the GXSXG motif. The tract at residues 141-207 (LKDGLDGVYW…RGLSDALRSE (67 aa)) is involved in homodimer formation. Tyrosine 190 acts as the Proton acceptor in catalysis. Positions 190, 194, and 223 each coordinate NADP(+). The Lowers pKa of active site Tyr role is filled by lysine 194. The chain crosses the membrane as a helical span at residues 288–308 (TNNFLLDTLWLIVSSVGVPIW).

This sequence belongs to the short-chain dehydrogenases/reductases (SDR) family. In terms of assembly, homodimer; a minor portion forms homotetramers.

The protein resides in the endoplasmic reticulum membrane. The catalysed reaction is sphinganine + NADP(+) = 3-oxosphinganine + NADPH + H(+). Its pathway is lipid metabolism; sphingolipid metabolism. Functionally, catalyzes the reduction of 3'-oxosphinganine (3-ketodihydrosphingosine/KDS) to sphinganine (dihydrosphingosine/DHS), the second step of de novo sphingolipid biosynthesis. The sequence is that of 3-ketodihydrosphingosine reductase TSC10 (TSC10) from Cryptococcus neoformans var. neoformans serotype D (strain JEC21 / ATCC MYA-565) (Filobasidiella neoformans).